A 256-amino-acid polypeptide reads, in one-letter code: Enolase-phosphatase E1 (256 aa).

The Mg(2+) site is built by D14 and E16. Substrate is bound by residues 142–143 and K176; that span reads SS. Mg(2+) is bound at residue D201.

Belongs to the HAD-like hydrolase superfamily. MasA/MtnC family. In terms of assembly, monomer. The cofactor is Mg(2+).

The protein resides in the cytoplasm. Its subcellular location is the nucleus. It catalyses the reaction 5-methylsulfanyl-2,3-dioxopentyl phosphate + H2O = 1,2-dihydroxy-5-(methylsulfanyl)pent-1-en-3-one + phosphate. It participates in amino-acid biosynthesis; L-methionine biosynthesis via salvage pathway; L-methionine from S-methyl-5-thio-alpha-D-ribose 1-phosphate: step 3/6. It functions in the pathway amino-acid biosynthesis; L-methionine biosynthesis via salvage pathway; L-methionine from S-methyl-5-thio-alpha-D-ribose 1-phosphate: step 4/6. Its function is as follows. Bifunctional enzyme that catalyzes the enolization of 2,3-diketo-5-methylthiopentyl-1-phosphate (DK-MTP-1-P) into the intermediate 2-hydroxy-3-keto-5-methylthiopentenyl-1-phosphate (HK-MTPenyl-1-P), which is then dephosphorylated to form the acireductone 1,2-dihydroxy-3-keto-5-methylthiopentene (DHK-MTPene). This is Enolase-phosphatase E1 from Drosophila erecta (Fruit fly).